Consider the following 49-residue polypeptide: IgW transmembrane form Tm2T7/Tm7T7/Tm3T3 (49 aa).

Asparagine 3 is a glycosylation site (N-linked (GlcNAc...) asparagine). The helical transmembrane segment at 25 to 45 threads the bilayer; it reads VAAFAILFILSFLYSTFVTVV.

In terms of tissue distribution, expressed in the spleen. May also be expressed in other lymphoid tissues.

It localises to the membrane. The chain is IgW transmembrane form Tm2T7/Tm7T7/Tm3T3 from Heterodontus francisci (Horn shark).